We begin with the raw amino-acid sequence, 134 residues long: Profilin-3 (134 aa).

C13 and C118 are joined by a disulfide. Positions 84–100 (AVIRGKKGSGGITIKKT) match the Involved in PIP2 interaction motif. T114 is modified (phosphothreonine).

The protein belongs to the profilin family. Occurs in many kinds of cells as a complex with monomeric actin in a 1:1 ratio. Phosphorylated by MAP kinases.

It localises to the cytoplasm. Its subcellular location is the cytoskeleton. Functionally, binds to actin and affects the structure of the cytoskeleton. At high concentrations, profilin prevents the polymerization of actin, whereas it enhances it at low concentrations. The protein is Profilin-3 of Olea europaea (Common olive).